We begin with the raw amino-acid sequence, 453 residues long: Chromosomal replication initiator protein DnaA (453 aa).

Residues 1-74 form a domain I, interacts with DnaA modulators region; it reads MKEKQFWNRI…GFEIYDAEIT (74 aa). The segment at 74 to 113 is domain II; it reads TPHYIFTKPQDTTSSQVEEATNLTLYDYSPKLVSIPYSDT. The domain III, AAA+ region stretch occupies residues 114–331; it reads GLKEKYTFDN…GAINDITLIA (218 aa). ATP is bound by residues Gly158, Gly160, Lys161, and Thr162. Positions 332–453 are domain IV, binds dsDNA; it reads RVKKIKDITI…EIESIKKKIK (122 aa).

This sequence belongs to the DnaA family. In terms of assembly, oligomerizes as a right-handed, spiral filament on DNA at oriC.

The protein resides in the cytoplasm. Plays an essential role in the initiation and regulation of chromosomal replication. ATP-DnaA binds to the origin of replication (oriC) to initiate formation of the DNA replication initiation complex once per cell cycle. Binds the DnaA box (a 9 base pair repeat at the origin) and separates the double-stranded (ds)DNA. Forms a right-handed helical filament on oriC DNA; dsDNA binds to the exterior of the filament while single-stranded (ss)DNA is stabiized in the filament's interior. The ATP-DnaA-oriC complex binds and stabilizes one strand of the AT-rich DNA unwinding element (DUE), permitting loading of DNA polymerase. After initiation quickly degrades to an ADP-DnaA complex that is not apt for DNA replication. Binds acidic phospholipids. The polypeptide is Chromosomal replication initiator protein DnaA (Streptococcus pneumoniae (strain Taiwan19F-14)).